Reading from the N-terminus, the 938-residue chain is Catenin delta-1 (938 aa).

Met-1 carries the N-acetylmethionine modification. The necessary and sufficient for interaction with CCDC85B stretch occupies residues Met-1–Met-357. Position 4 is a phosphoserine (Ser-4). Residues Ala-10 to Val-46 are a coiled coil. The residue at position 47 (Ser-47) is a Phosphoserine. Thr-59 bears the Phosphothreonine mark. Tyr-112 carries the post-translational modification Phosphotyrosine; by FYN. Phosphoserine is present on Ser-125. Phosphotyrosine occurs at positions 217 and 221. A Phosphoserine modification is found at Ser-225. Tyr-228 carries the post-translational modification Phosphotyrosine. 2 positions are modified to phosphoserine: Ser-230 and Ser-252. Tyr-257 carries the post-translational modification Phosphotyrosine. Phosphoserine is present on residues Ser-268 and Ser-269. Tyr-280 is modified (phosphotyrosine). Ser-288 is modified (phosphoserine). Tyr-291 carries the post-translational modification Phosphotyrosine. Ser-300 is modified (phosphoserine). Residue Thr-304 is modified to Phosphothreonine. Phosphoserine is present on residues Ser-320, Ser-346, Ser-349, and Ser-352. ARM repeat units follow at residues Pro-358–Tyr-395, Asp-398–Phe-437, Gln-441–Thr-475, and Leu-476–Cys-516. A Glycyl lysine isopeptide (Lys-Gly) (interchain with G-Cter in SUMO2) cross-link involves residue Lys-421. Residue Lys-517 forms a Glycyl lysine isopeptide (Lys-Gly) (interchain with G-Cter in SUMO2) linkage. ARM repeat units lie at residues Leu-534–Ser-573, Leu-583–Gly-624, Ala-653–Ala-693, Arg-700–Val-739, Asp-740–Asn-780, and Thr-781–Leu-826. The residue at position 617 (Ser-617) is a Phosphoserine. Positions Lys-622 to Phe-629 match the Nuclear localization signal (NLS) motif. Ser-713 is modified (phosphoserine). Ser-811, Ser-847, Ser-857, Ser-859, Ser-861, and Ser-864 each carry phosphoserine. The tract at residues Asn-855–Ile-938 is disordered. At Tyr-865 the chain carries Phosphotyrosine. Ser-868 carries the phosphoserine modification. Thr-869 carries the phosphothreonine modification. Residues Arg-875 to Ile-888 show a composition bias toward basic and acidic residues. Phosphoserine is present on Ser-879. Lys-882 is covalently cross-linked (Glycyl lysine isopeptide (Lys-Gly) (interchain with G-Cter in SUMO2)). Residues Asn-892 to Asn-908 show a composition bias toward polar residues. At Ser-899 the chain carries Phosphoserine. Residue Tyr-904 is modified to Phosphotyrosine. A phosphothreonine mark is found at Thr-906 and Thr-916. Residues Glu-909–Asp-922 are compositionally biased toward basic and acidic residues. At Ser-920 the chain carries Phosphoserine.

Belongs to the beta-catenin family. Belongs to a multiprotein cell-cell adhesion complex that also contains E-cadherin/CDH1, alpha-catenin/CTNNA1, beta-catenin/CTNNB1, and gamma-catenin/JUP. Binds to the C-terminal fragment of PSEN1 and mutually competes for CDH1. Interacts with ZBTB33. Interacts with GLIS2. Interacts with FER. Interacts with NANOS1 (via N-terminal region). Interacts (via N-terminus) with GNA12; the interaction regulates CDH1-mediated cell-cell adhesion. Interacts with GNA13. Component of a cadherin:catenin adhesion complex composed of at least of CDH26, beta-catenin/CTNNB1, alpha-catenin/CTNNA1 and p120 catenin/CTNND1. Interacts with CCDC85B. Interacts with PLPP3; negatively regulates the PLPP3-mediated stabilization of CTNNB1. Interacts with DSG3; the interaction facilitates DSG3 localization and retention at cell-cell junctions. Interacts with CTNND1/p120-catenin; the interaction controls CADH5 endocytosis. Phosphorylated by FER and other protein-tyrosine kinases. Phosphorylated at Ser-288 by PAK5. Dephosphorylated by PTPRJ. Expressed in basal keratinocytes (at protein level).

The protein resides in the cell junction. It is found in the adherens junction. Its subcellular location is the cytoplasm. The protein localises to the nucleus. It localises to the cell membrane. In terms of biological role, key regulator of cell-cell adhesion that associates with and regulates the cell adhesion properties of both C-, E- and N-cadherins, being critical for their surface stability. Promotes localization and retention of DSG3 at cell-cell junctions, via its interaction with DSG3. Beside cell-cell adhesion, regulates gene transcription through several transcription factors including ZBTB33/Kaiso2 and GLIS2, and the activity of Rho family GTPases and downstream cytoskeletal dynamics. Implicated both in cell transformation by SRC and in ligand-induced receptor signaling through the EGF, PDGF, CSF-1 and ERBB2 receptors. The protein is Catenin delta-1 (Ctnnd1) of Mus musculus (Mouse).